The primary structure comprises 172 residues: RNA pyrophosphohydrolase (172 aa).

In terms of domain architecture, Nudix hydrolase spans 8–153; the sequence is QHRPNVGVVL…KRGVYEAVVA (146 aa). Residues 43 to 64 carry the Nudix box motif; sequence GGVDEGEDLEVAARRELAEETG.

This sequence belongs to the Nudix hydrolase family. RppH subfamily. It depends on a divalent metal cation as a cofactor.

Functionally, accelerates the degradation of transcripts by removing pyrophosphate from the 5'-end of triphosphorylated RNA, leading to a more labile monophosphorylated state that can stimulate subsequent ribonuclease cleavage. In Caulobacter vibrioides (strain ATCC 19089 / CIP 103742 / CB 15) (Caulobacter crescentus), this protein is RNA pyrophosphohydrolase.